The primary structure comprises 308 residues: Olfactory receptor 4E2 (308 aa).

Residues 1–24 (MGALNQTRVTEFIFLGLTDNWVLE) are Extracellular-facing. An N-linked (GlcNAc...) asparagine glycan is attached at Asn-5. A helical membrane pass occupies residues 25–45 (ILFFVPFTVTYMLTLLGNFLI). The Cytoplasmic segment spans residues 46–57 (VVTIVFTPRLHN). Residues 58–78 (PMYFFLSNLSFIDICHSSVTV) form a helical membrane-spanning segment. The Extracellular portion of the chain corresponds to 79-97 (PKMLEGLLLERKTISFDNC). Residues Cys-97 and Cys-179 are joined by a disulfide bond. A helical membrane pass occupies residues 98 to 118 (IAQLFFLHLFACSEIFLLTIM). Cu cation contacts are provided by His-105 and Cys-109. Topologically, residues 119–143 (AYDRYVAICIPLHYSNVMNMKVCVQ) are cytoplasmic. The helical transmembrane segment at 144-164 (LVFALWLGGTIHSLVQTFLTI) threads the bilayer. At 165–204 (RLPYCGPNIIDSYFCDVPPVIKLACTDTYLTGILIVSNSG) the chain is on the extracellular side. Residues 205–225 (TISLVCFLALVTSYTVILFSL) traverse the membrane as a helical segment. Residues 226–236 (RKQSAEGRRKA) lie on the Cytoplasmic side of the membrane. The helical transmembrane segment at 237-257 (LSTCSAHFMVVALFFGPCIFL) threads the bilayer. The Extracellular segment spans residues 258–268 (YTRPDSSFSID). Cu cation is bound at residue Arg-260. The chain crosses the membrane as a helical span at residues 269 to 289 (KVVSVFYTVVTPLLNPLIYTL). Topologically, residues 290–308 (RNEEVKTAMKHLRQRRICS) are cytoplasmic.

The protein belongs to the G-protein coupled receptor 1 family. Expressed in olfactory epithelium, specifically in the olfactory sensory neurons of the septal organ.

The protein localises to the cell membrane. Its activity is regulated as follows. Copper binding enhances receptor activity in response to odorant binding. Olfactory receptor that is activated by the binding of organosulfur odorants with thioether groups such as (methylthio)methanethiol (MTMT) and bis(methylthiomethyl) disulfide. Also binds odorants cis-cyclooctene and tert-butyl mercaptan. The activity of this receptor is mediated by G proteins which activate adenylyl cyclase (Potential). This Mus musculus (Mouse) protein is Olfactory receptor 4E2.